Consider the following 745-residue polypeptide: Protein PHOX1 (745 aa).

The span at 1-10 shows a compositional bias: basic residues; it reads MGKPTGKKKN. Positions 1-37 are disordered; that stretch reads MGKPTGKKKNNNYTEMPPTESSTTGGGKTGKSFDRSA. TPR repeat units follow at residues 52–85, 90–125, and 126–159; these read ALEL…LPRD, AYLR…SPRF, and SKAL…EPEN. The PB1 domain maps to 280-359; the sequence is TRTVKLVHGD…GSFRLYIAEV (80 aa). TPR repeat units lie at residues 406–441, 443–472, 494–528, and 553–586; these read EHWI…YTEA, EDIV…AMFN, ETIL…KSDF, and GEVD…WEEM.

Interacts with myosin XI-1 and XI-K.

It is found in the cytoplasmic vesicle membrane. Carboxylate clamp type tetratricopeptide repeat protein that may act as a potential Hsp90/Hsp70 co-chaperone. Contributes to polar growth of root hairs. The chain is Protein PHOX1 from Arabidopsis thaliana (Mouse-ear cress).